Reading from the N-terminus, the 223-residue chain is Small ribosomal subunit protein uS3 (223 aa).

In terms of domain architecture, KH type-2 spans 39 to 107 (VRSYLAKKLS…PVHINIQEIR (69 aa)).

The protein belongs to the universal ribosomal protein uS3 family. As to quaternary structure, part of the 30S ribosomal subunit. Forms a tight complex with proteins S10 and S14.

In terms of biological role, binds the lower part of the 30S subunit head. Binds mRNA in the 70S ribosome, positioning it for translation. The polypeptide is Small ribosomal subunit protein uS3 (Nitrosococcus oceani (strain ATCC 19707 / BCRC 17464 / JCM 30415 / NCIMB 11848 / C-107)).